A 22-amino-acid polypeptide reads, in one-letter code: Zinc metalloproteinase oxiagin (22 aa).

Positions 14–22 constitute a Peptidase M12B domain; it reads CYIEFYVVV.

It belongs to the venom metalloproteinase (M12B) family. P-III subfamily. P-IIId sub-subfamily. Heterotrimer; disulfide-linked. The heterotrimer consists of 1 metalloproteinase chain and 2 lectin chains. Zn(2+) is required as a cofactor. Post-translationally, N-glycosylated. As to expression, expressed by the venom gland.

The protein resides in the secreted. Functionally, snake venom metalloproteinase that inhibits the classical complement pathway dose-dependently. It acts by binding to carbohydrates of IgG within the antibody-sensitized sheep erythrocytes (EA) complex, and thus prevents interaction of component C2 with immobilized C4b. Also induces cation-independent hemagglutination that can be prevented by D-galactose pretreatment. The protein is Zinc metalloproteinase oxiagin of Naja oxiana (Central Asian cobra).